We begin with the raw amino-acid sequence, 433 residues long: Succinate--CoA ligase [GDP-forming] subunit beta, mitochondrial (433 aa).

The transit peptide at 1–38 (MASPVAIAAQAGKLLRERALRPLLAVRSQAGHLTPRRW) directs the protein to the mitochondrion. Residues 47 to 275 (KKLMSEHGVR…NAEFRQKDIF (229 aa)) enclose the ATP-grasp domain. Position 58 (glutamine 58) interacts with GTP. Lysine 67 is modified (N6-acetyllysine; alternate). Lysine 67 carries the post-translational modification N6-succinyllysine; alternate. An N6-acetyllysine modification is found at lysine 74. An N6-succinyllysine modification is found at lysine 79. 91 to 93 (GRG) is a GTP binding site. Lysine 112, lysine 133, and lysine 140 each carry N6-acetyllysine. GTP is bound at residue leucine 147. Position 162 is a phosphoserine (serine 162). Lysine 201 carries the N6-acetyllysine modification. Phosphoserine is present on serine 217. N6-acetyllysine is present on residues lysine 219 and lysine 228. Asparagine 244 and aspartate 258 together coordinate Mg(2+). Position 272 is an N6-acetyllysine (lysine 272). Residue asparagine 309 coordinates substrate. An N6-succinyllysine modification is found at lysine 339. At lysine 348 the chain carries N6-acetyllysine. 366 to 368 (GIV) contacts substrate. An N6-acetyllysine mark is found at lysine 387, lysine 407, and lysine 424.

Belongs to the succinate/malate CoA ligase beta subunit family. GTP-specific subunit beta subfamily. As to quaternary structure, heterodimer of an alpha and a beta subunit. The beta subunit determines specificity for GTP. The cofactor is Mg(2+).

It is found in the mitochondrion. It carries out the reaction GTP + succinate + CoA = succinyl-CoA + GDP + phosphate. It participates in carbohydrate metabolism; tricarboxylic acid cycle; succinate from succinyl-CoA (ligase route): step 1/1. Functionally, GTP-specific succinyl-CoA synthetase functions in the citric acid cycle (TCA), coupling the hydrolysis of succinyl-CoA to the synthesis of GTP and thus represents the only step of substrate-level phosphorylation in the TCA. The beta subunit provides nucleotide specificity of the enzyme and binds the substrate succinate, while the binding sites for coenzyme A and phosphate are found in the alpha subunit. In Mus musculus (Mouse), this protein is Succinate--CoA ligase [GDP-forming] subunit beta, mitochondrial.